The following is a 542-amino-acid chain: CTP synthase (542 aa).

Residues 1 to 265 (MTRYIFITGG…DDEVLSVFGI (265 aa)) form an amidoligase domain region. Ser-13 provides a ligand contact to CTP. Ser-13 lines the UTP pocket. ATP contacts are provided by residues 14–19 (SLGKGL) and Asp-71. Mg(2+) is bound by residues Asp-71 and Glu-139. CTP-binding positions include 146–148 (DIE), 186–191 (KTKPTQ), and Lys-222. Residues 186–191 (KTKPTQ) and Lys-222 contribute to the UTP site. Residues 291–541 (TIAIVGKYTG…VEAAVEQSRL (251 aa)) enclose the Glutamine amidotransferase type-1 domain. Residue Gly-353 participates in L-glutamine binding. The active-site Nucleophile; for glutamine hydrolysis is the Cys-380. Residues 381 to 384 (FGMQ), Glu-404, and Arg-469 each bind L-glutamine. Residues His-514 and Glu-516 contribute to the active site.

This sequence belongs to the CTP synthase family. As to quaternary structure, homotetramer.

The catalysed reaction is UTP + L-glutamine + ATP + H2O = CTP + L-glutamate + ADP + phosphate + 2 H(+). It carries out the reaction L-glutamine + H2O = L-glutamate + NH4(+). It catalyses the reaction UTP + NH4(+) + ATP = CTP + ADP + phosphate + 2 H(+). Its pathway is pyrimidine metabolism; CTP biosynthesis via de novo pathway; CTP from UDP: step 2/2. Its activity is regulated as follows. Allosterically activated by GTP, when glutamine is the substrate; GTP has no effect on the reaction when ammonia is the substrate. The allosteric effector GTP functions by stabilizing the protein conformation that binds the tetrahedral intermediate(s) formed during glutamine hydrolysis. Inhibited by the product CTP, via allosteric rather than competitive inhibition. Its function is as follows. Catalyzes the ATP-dependent amination of UTP to CTP with either L-glutamine or ammonia as the source of nitrogen. Regulates intracellular CTP levels through interactions with the four ribonucleotide triphosphates. This chain is CTP synthase, found in Parvibaculum lavamentivorans (strain DS-1 / DSM 13023 / NCIMB 13966).